We begin with the raw amino-acid sequence, 444 residues long: Amino-acid acetyltransferase (444 aa).

Residues 295–434 form the N-acetyltransferase domain; the sequence is EKVRRANIND…QALYNYQRRS (140 aa).

The protein belongs to the acetyltransferase family. ArgA subfamily. In terms of assembly, homohexamer.

It is found in the cytoplasm. The enzyme catalyses L-glutamate + acetyl-CoA = N-acetyl-L-glutamate + CoA + H(+). It participates in amino-acid biosynthesis; L-arginine biosynthesis; N(2)-acetyl-L-ornithine from L-glutamate: step 1/4. The sequence is that of Amino-acid acetyltransferase from Proteus mirabilis (strain HI4320).